Reading from the N-terminus, the 105-residue chain is UPF0235 protein CT1832 (105 aa).

This sequence belongs to the UPF0235 family.

This chain is UPF0235 protein CT1832, found in Chlorobaculum tepidum (strain ATCC 49652 / DSM 12025 / NBRC 103806 / TLS) (Chlorobium tepidum).